We begin with the raw amino-acid sequence, 327 residues long: MKPGFSPRGGGFGGRGGFGDRGGRGGGRGGRGGFGGGRGGFGGGGRGRGGGGGGFRGRGGGGGRGGGFQSGGGRGRGGGRGGKRGNQSGKNVMVEPHRHEGVFICRGKEDALVTKNLVPGESVYGEKRVSISEGDDKIEYRAWNPFRSKLAAAILGGVDQIHIKPGAKVLYLGAASGTTVSHVSDIVGPDGLVYAVEFSHRSGRDLINLAKKRTNIIPVIEDARHPHKYRMLIAMVDVIFADVAQPDQTRIVALNAHTFLRNGGHFVISIKANCIDSTASAEAVFASEVKKMQQENMKPQEQLTLEPYERDHAVVVGVYRPPPKAKN.

The disordered stretch occupies residues 1–93; sequence MKPGFSPRGG…RGNQSGKNVM (93 aa). Gly residues predominate over residues 7 to 80; that stretch reads PRGGGFGGRG…GGGRGRGGGR (74 aa). Arg8, Arg15, Arg21, Arg24, Arg28, and Arg31 each carry asymmetric dimethylarginine. Residues Lys90, Lys108, and Lys115 each participate in a glycyl lysine isopeptide (Lys-Gly) (interchain with G-Cter in SUMO2) cross-link. Lys108 bears the N6-acetyllysine mark. At Ser122 the chain carries Phosphoserine. Lys127 bears the N6-acetyllysine mark. Phosphoserine occurs at positions 130 and 132. Glycyl lysine isopeptide (Lys-Gly) (interchain with G-Cter in SUMO2) cross-links involve residues Lys137, Lys149, and Lys164. S-adenosyl-L-methionine contacts are provided by residues 178-179 and 197-198; these read TT and EF. N6-acetyllysine occurs at positions 211 and 212. Residues 222–223 and 242–245 each bind S-adenosyl-L-methionine; these read DA and DVAQ.

It belongs to the methyltransferase superfamily. Fibrillarin family. Component of box C/D small nucleolar ribonucleoprotein (snoRNP) particles that contain SNU13, FBL, NOP5 and NOP56, plus a guide RNA. It is associated with the U3, U8, U13, X and Y small nuclear RNAs. Component of several ribosomal and nucleolar protein complexes. Part of the small subunit (SSU) processome, composed of more than 70 proteins and the RNA chaperone small nucleolar RNA (snoRNA) U3. Interacts with PRMT5 and UTP20. Interacts with DDX5 and C1QBP. Interacts with NOL11. Interacts with PIH1D1. Interacts with RRP1B. Interacts with NOLC1. Interacts with SDE2. Interacts with NOP2 and NOP56. Post-translationally, ubiquitinated. Ubiquitination leads to proteasomal degradation. Deubiquitinated by USP36. By homology to other fibrillarins, some or all of the N-terminal domain arginines are modified to asymmetric dimethylarginine (DMA). In terms of processing, acetylated by CREBBP/CBP, preventing methylation of 'Gln-105' of histone H2A (H2AQ104me), without affecting rRNA methylation. Deacetylation by SIRT7 restores methylation of 'Gln-105' of histone H2A (H2AQ104me).

Its subcellular location is the nucleus. The protein localises to the nucleolus. The protein resides in the nucleoplasm. The enzyme catalyses L-glutaminyl-[histone H2A] + S-adenosyl-L-methionine = N(5)-methyl-L-glutaminyl-[histone H2A] + S-adenosyl-L-homocysteine + H(+). It catalyses the reaction a ribonucleotide in rRNA + S-adenosyl-L-methionine = a 2'-O-methylribonucleotide in rRNA + S-adenosyl-L-homocysteine + H(+). The catalysed reaction is a ribonucleotide in U6 snRNA + S-adenosyl-L-methionine = a 2'-O-methylribonucleotide in U6 snRNA + S-adenosyl-L-homocysteine + H(+). Its function is as follows. S-adenosyl-L-methionine-dependent methyltransferase that has the ability to methylate both RNAs and proteins. Involved in pre-rRNA processing by catalyzing the site-specific 2'-hydroxyl methylation of ribose moieties in pre-ribosomal RNA. Site specificity is provided by a guide RNA that base pairs with the substrate. Methylation occurs at a characteristic distance from the sequence involved in base pairing with the guide RNA. Probably catalyzes 2'-O-methylation of U6 snRNAs in box C/D RNP complexes. U6 snRNA 2'-O-methylation is required for mRNA splicing fidelity. Also acts as a protein methyltransferase by mediating methylation of 'Gln-105' of histone H2A (H2AQ104me), a modification that impairs binding of the FACT complex and is specifically present at 35S ribosomal DNA locus. Part of the small subunit (SSU) processome, first precursor of the small eukaryotic ribosomal subunit. During the assembly of the SSU processome in the nucleolus, many ribosome biogenesis factors, an RNA chaperone and ribosomal proteins associate with the nascent pre-rRNA and work in concert to generate RNA folding, modifications, rearrangements and cleavage as well as targeted degradation of pre-ribosomal RNA by the RNA exosome. This Rattus norvegicus (Rat) protein is rRNA 2'-O-methyltransferase fibrillarin (Fbl).